Here is a 527-residue protein sequence, read N- to C-terminus: Matrix metalloproteinase-19 (527 aa).

The N-terminal stretch at 1-18 (MDWQQLWLAFLLPMTVSG) is a signal peptide. A propeptide spanning residues 19-98 (RALGPTEKEA…EDPFNQKSLK (80 aa)) is cleaved from the precursor. The Cysteine switch motif lies at 84 to 91 (PRCGLEDP). Cys-86 provides a ligand contact to Zn(2+). Asn-109 carries N-linked (GlcNAc...) asparagine glycosylation. His-213 lines the Zn(2+) pocket. Residue Glu-214 is part of the active site. The Zn(2+) site is built by His-217 and His-223. Hemopexin repeat units lie at residues 286–333 (PNPC…WEGL), 334–372 (PGNLDAAVYSPRTRRTHFFKGNKVWRYVDFKMSPGFPMK), 377–425 (EPNL…FTGV), and 426–471 (PDRP…WMHC). Cys-289 and Cys-471 form a disulfide bridge. 2 N-linked (GlcNAc...) asparagine glycosylation sites follow: Asn-464 and Asn-479. The disordered stretch occupies residues 473 to 500 (SQTPDTNSSTGDVTPSTTDTVLGTTPST). Asp-512 carries GPI-anchor amidated aspartate lipidation. The propeptide at 513 to 527 (SASLSFSANVTLLGA) is removed in mature form. N-linked (GlcNAc...) asparagine glycosylation occurs at Asn-521.

This sequence belongs to the peptidase M10A family. The cofactor is Zn(2+). It depends on Ca(2+) as a cofactor. Post-translationally, activated by autolytic cleavage after Lys-98. In terms of processing, tyrosine phosphorylated by PKDCC/VLK. Highly expressed in the liver. Expressed in the arterial tunica media of large blood vessels.

Its subcellular location is the cell membrane. It is found in the secreted. It localises to the extracellular space. The protein resides in the extracellular matrix. Endopeptidase that degrades various components of the extracellular matrix, such as aggrecan and cartilage oligomeric matrix protein (comp), during development, haemostasis and pathological conditions (arthritic disease). May also play a role in neovascularization or angiogenesis. Hydrolyzes collagen type IV, laminin, nidogen, nascin-C isoform, fibronectin, and type I gelatin. The protein is Matrix metalloproteinase-19 (Mmp19) of Mus musculus (Mouse).